Consider the following 546-residue polypeptide: Glutathione reductase (546 aa).

The transit peptide at 2–46 (YKHRYFHFFFFFFFFLVSTKIIRSFTFLNNNTNLSNPVYFKKKAN) directs the protein to the apicoplast. FAD contacts are provided by Ser-58 and Gly-59. A glutathione-binding site is contributed by Ser-58. Residue Arg-65 coordinates glutathione. Residues Glu-78, Thr-85, Cys-86, and Lys-94 each contribute to the FAD site. Residues Cys-86 and Cys-91 are joined by a disulfide bond. Position 141 (Tyr-141) interacts with glutathione. Ala-157 contributes to the FAD binding site. Residues Ile-233, Glu-236, Arg-253, Arg-259, and Gly-318 each coordinate NADP(+). The FAD site is built by Asp-358 and Thr-400. Arg-408 contacts glutathione. Val-430 is an NADP(+) binding site. Residue His-531 coordinates FAD. Residue His-531 is the Proton acceptor of the active site.

Belongs to the class-I pyridine nucleotide-disulfide oxidoreductase family. In terms of assembly, homodimer. The cofactor is FAD.

Its subcellular location is the cytoplasm. The protein localises to the plastid. It is found in the apicoplast. The catalysed reaction is 2 glutathione + NADP(+) = glutathione disulfide + NADPH + H(+). Catalyzes the reduction of glutathione disulfide (GSSG) to reduced glutathione (GSH). Constitutes the major mechanism to maintain a high GSH:GSSG ratio in the cytosol. In Plasmodium falciparum (isolate 3D7), this protein is Glutathione reductase.